The chain runs to 471 residues: Glutamate--tRNA ligase (471 aa).

Residues 10–20 (PSPTGFLHIGG) carry the 'HIGH' region motif. The disordered stretch occupies residues 117 to 137 (GRPPRYDGRWRDRPASERPTD). Positions 239-243 (KLSKR) match the 'KMSKS' region motif. Lys-242 contacts ATP.

It belongs to the class-I aminoacyl-tRNA synthetase family. Glutamate--tRNA ligase type 1 subfamily. In terms of assembly, monomer.

The protein localises to the cytoplasm. It catalyses the reaction tRNA(Glu) + L-glutamate + ATP = L-glutamyl-tRNA(Glu) + AMP + diphosphate. Its function is as follows. Catalyzes the attachment of glutamate to tRNA(Glu) in a two-step reaction: glutamate is first activated by ATP to form Glu-AMP and then transferred to the acceptor end of tRNA(Glu). The chain is Glutamate--tRNA ligase from Azorhizobium caulinodans (strain ATCC 43989 / DSM 5975 / JCM 20966 / LMG 6465 / NBRC 14845 / NCIMB 13405 / ORS 571).